The chain runs to 296 residues: Myozenin-1 (296 aa).

Serine 82 is subject to Phosphoserine. Composition is skewed to gly residues over residues 105 to 117 (FSYG…GQAG) and 134 to 170 (SGFG…QAGG). Positions 105-172 (FSYGKGSSGG…GSGDQAGGDG (68 aa)) are disordered.

The protein belongs to the myozenin family. In terms of assembly, interacts with ACTN2, ACTN3, FLNA, FLNB, FLNC, LDB3, PPP3CA and TCAP. Interacts via its C-terminal region with MYOT. In terms of tissue distribution, expressed primarily in skeletal muscle and specifically enriched in the gastrocnemius, which is composed predominantly of fast-twitch muscle fibers. Detected at lower levels in heart.

The protein localises to the nucleus. It localises to the cell projection. It is found in the pseudopodium. In terms of biological role, myozenins may serve as intracellular binding proteins involved in linking Z-disk proteins such as alpha-actinin, gamma-filamin, TCAP/telethonin, LDB3/ZASP and localizing calcineurin signaling to the sarcomere. Plays an important role in the modulation of calcineurin signaling. May play a role in myofibrillogenesis. This chain is Myozenin-1, found in Mus musculus (Mouse).